A 231-amino-acid polypeptide reads, in one-letter code: Ribonuclease 3 (231 aa).

In terms of domain architecture, RNase III spans 1 to 134 (MKTLEKKLAE…FLGALLLDAG (134 aa)). E47 is a binding site for Mg(2+). D51 is an active-site residue. Mg(2+)-binding residues include D120 and E123. The active site involves E123. One can recognise a DRBM domain in the interval 160 to 229 (DYKTALQELL…AKNALEKLQR (70 aa)).

The protein belongs to the ribonuclease III family. In terms of assembly, homodimer. Mg(2+) is required as a cofactor.

It localises to the cytoplasm. The enzyme catalyses Endonucleolytic cleavage to 5'-phosphomonoester.. Digests double-stranded RNA. Involved in the processing of primary rRNA transcript to yield the immediate precursors to the large and small rRNAs (23S and 16S). Also processes some mRNAs, and tRNAs when they are encoded in the rRNA operon. Functionally, CRISPR (clustered regularly interspaced short palindromic repeat) is an adaptive immune system that provides protection against mobile genetic elements (viruses, transposable elements and conjugative plasmids). CRISPR clusters contain spacers, sequences complementary to antecedent mobile elements, and target invading nucleic acids. CRISPR clusters are transcribed and processed into CRISPR RNA (crRNA). In this organism endogenous ribonuclease 3 and Cas9 are required for correct coprocessing of pre-crRNA and the trans-encoded small RNA (tracrRNA). Cas9, crRNA and tracrRNA are required for cleavage of invading DNA. Complements pre-crRNA and tracrRNA coprocessing defects in an rnc deletion in S.pyogenes strain 370. The sequence is that of Ribonuclease 3 from Streptococcus mutans serotype c (strain ATCC 700610 / UA159).